The following is a 478-amino-acid chain: Cell division protein FtsZ homolog 2-1, chloroplastic (478 aa).

The interval 86–112 (EGTSTIVNPRKETSSGPVVEDFEEPSA) is disordered. 128 to 132 (GGGSN) lines the GTP pocket. Ser143 carries the post-translational modification Phosphoserine; by PGK1. GTP is bound by residues 217-219 (GTG), Glu248, and Arg252. Thr286 carries the phosphothreonine; by PGK1 modification. Asp296 lines the GTP pocket.

Belongs to the FtsZ family. In terms of assembly, aggregates to form a contractile ring-like structure; contraction of the ring was accompanied by an increase in the filament turnover rate. Self-interacts and binds to FTSZ1 in heteromers to form two morphologically distinct types of filaments, termed type-I (smooth filaments) and -II (rough filaments), in a GTP-dependent manner; the GDP-induced disassembly is inhibited by ARC6. Interacts (via C-terminus) with ARC6; this interaction enables ARC3 binding to FTSZ2. Part of a complex made of ARC3, ARC6, FTSZ1 and FTSZ2. Binds to MCD1 in an ARC6-dependent manner. Binds to CDP1/PARC6. Part of a complex made of CDP1/PARC6, ARC3 and FtsZ proteins in the middle of the plastid; this complex enhances the dynamics of Z rings during chloroplast division. Binds to PGK1. Filaments containing FTSZ2-1 are stabilized when in complex with GTP but destabilized after conversion of GTP into GDP; ARC6 conteracts this destabilisation by preventing the dissociation of GDP-bound FTSZ2 molecules thus inhibiting filament disassembly whereas ARC3 promotes GTPase activity thus accelerating the conversion of GTP into GDP and triggering FtsZ2 filaments disassembly. In terms of processing, phosphorylation at Ser-143 is necessary for interactions with ARC3, ARC6, FTSZ1 and FTSZ2-2. Phosphorylations at Ser-143 and Thr-286 are required for the formation of contractile ring at the chloroplast midpoint.

It localises to the plastid. Its subcellular location is the chloroplast stroma. The protein resides in the chloroplast thylakoid membrane. GTPase activity is enhanced by ARC3. Its function is as follows. Exhibits GTPase activity which converts GTP ligands to GDP. Component of the plastid division machinery consisting in a binary fission accomplished by the simultaneous constriction of the FtsZ ring on the stromal side of the inner envelope membrane, and the ARC5 ring on the cytosolic side of the outer envelope membrane. Required for plastid division in a dose-dependent manner. In the vegetative shoot apex, at the shoot apical meristem (SAM), where the proplastid-to-chloroplast transition takes place, major contributor of plastid division in the L1 and L3 layers and contributes equally with FTSZ1 in the L2 layer. The sequence is that of Cell division protein FtsZ homolog 2-1, chloroplastic from Arabidopsis thaliana (Mouse-ear cress).